Reading from the N-terminus, the 255-residue chain is Small ribosomal subunit protein uS2 (255 aa).

The interval 230–255 (QSSSGRDLGASSEVPVEPALEEAAEG) is disordered.

It belongs to the universal ribosomal protein uS2 family.

This is Small ribosomal subunit protein uS2 from Rhizobium etli (strain CIAT 652).